Here is a 393-residue protein sequence, read N- to C-terminus: NAD(P)H-quinone oxidoreductase subunit H, chloroplastic (393 aa).

The protein belongs to the complex I 49 kDa subunit family. NDH is composed of at least 16 different subunits, 5 of which are encoded in the nucleus.

Its subcellular location is the plastid. The protein localises to the chloroplast thylakoid membrane. It catalyses the reaction a plastoquinone + NADH + (n+1) H(+)(in) = a plastoquinol + NAD(+) + n H(+)(out). The catalysed reaction is a plastoquinone + NADPH + (n+1) H(+)(in) = a plastoquinol + NADP(+) + n H(+)(out). Functionally, NDH shuttles electrons from NAD(P)H:plastoquinone, via FMN and iron-sulfur (Fe-S) centers, to quinones in the photosynthetic chain and possibly in a chloroplast respiratory chain. The immediate electron acceptor for the enzyme in this species is believed to be plastoquinone. Couples the redox reaction to proton translocation, and thus conserves the redox energy in a proton gradient. This is NAD(P)H-quinone oxidoreductase subunit H, chloroplastic from Daucus carota (Wild carrot).